Consider the following 300-residue polypeptide: Bifunctional protein FolD 2 (300 aa).

Residues 166 to 168, Ser191, and Ile232 contribute to the NADP(+) site; that span reads GRS.

Belongs to the tetrahydrofolate dehydrogenase/cyclohydrolase family. As to quaternary structure, homodimer.

It catalyses the reaction (6R)-5,10-methylene-5,6,7,8-tetrahydrofolate + NADP(+) = (6R)-5,10-methenyltetrahydrofolate + NADPH. The enzyme catalyses (6R)-5,10-methenyltetrahydrofolate + H2O = (6R)-10-formyltetrahydrofolate + H(+). The protein operates within one-carbon metabolism; tetrahydrofolate interconversion. Catalyzes the oxidation of 5,10-methylenetetrahydrofolate to 5,10-methenyltetrahydrofolate and then the hydrolysis of 5,10-methenyltetrahydrofolate to 10-formyltetrahydrofolate. The sequence is that of Bifunctional protein FolD 2 from Roseobacter denitrificans (strain ATCC 33942 / OCh 114) (Erythrobacter sp. (strain OCh 114)).